We begin with the raw amino-acid sequence, 471 residues long: Glutamate--tRNA ligase (471 aa).

Residues 9–19 carry the 'HIGH' region motif; sequence PSPTGYLHVGG. 4 residues coordinate Zn(2+): Cys98, Cys100, Cys125, and His127. The short motif at 237-241 is the 'KMSKS' region element; sequence KLSKR. Residue Lys240 coordinates ATP.

The protein belongs to the class-I aminoacyl-tRNA synthetase family. Glutamate--tRNA ligase type 1 subfamily. In terms of assembly, monomer. Zn(2+) serves as cofactor.

The protein localises to the cytoplasm. It carries out the reaction tRNA(Glu) + L-glutamate + ATP = L-glutamyl-tRNA(Glu) + AMP + diphosphate. In terms of biological role, catalyzes the attachment of glutamate to tRNA(Glu) in a two-step reaction: glutamate is first activated by ATP to form Glu-AMP and then transferred to the acceptor end of tRNA(Glu). This is Glutamate--tRNA ligase from Shigella boydii serotype 4 (strain Sb227).